We begin with the raw amino-acid sequence, 279 residues long: 3-methyl-2-oxobutanoate hydroxymethyltransferase (279 aa).

Mg(2+) contacts are provided by Asp-53 and Asp-92. 3-methyl-2-oxobutanoate contacts are provided by residues 53-54, Asp-92, and Lys-122; that span reads DS. Residue Glu-124 participates in Mg(2+) binding. The Proton acceptor role is filled by Glu-191.

It belongs to the PanB family. As to quaternary structure, homodecamer; pentamer of dimers. Mg(2+) is required as a cofactor.

The protein resides in the cytoplasm. The catalysed reaction is 3-methyl-2-oxobutanoate + (6R)-5,10-methylene-5,6,7,8-tetrahydrofolate + H2O = 2-dehydropantoate + (6S)-5,6,7,8-tetrahydrofolate. The protein operates within cofactor biosynthesis; (R)-pantothenate biosynthesis; (R)-pantoate from 3-methyl-2-oxobutanoate: step 1/2. Functionally, catalyzes the reversible reaction in which hydroxymethyl group from 5,10-methylenetetrahydrofolate is transferred onto alpha-ketoisovalerate to form ketopantoate. The polypeptide is 3-methyl-2-oxobutanoate hydroxymethyltransferase (Maricaulis maris (strain MCS10) (Caulobacter maris)).